Reading from the N-terminus, the 40-residue chain is Photosystem II reaction center protein J (40 aa).

The helical transmembrane segment at 10-30 (LWLVGTVAGTLVIGLLGVFFY) threads the bilayer.

Belongs to the PsbJ family. As to quaternary structure, PSII is composed of 1 copy each of membrane proteins PsbA, PsbB, PsbC, PsbD, PsbE, PsbF, PsbH, PsbI, PsbJ, PsbK, PsbL, PsbM, PsbT, PsbX, PsbY, PsbZ, Psb30/Ycf12, at least 3 peripheral proteins of the oxygen-evolving complex and a large number of cofactors. It forms dimeric complexes.

The protein resides in the plastid. Its subcellular location is the chloroplast thylakoid membrane. One of the components of the core complex of photosystem II (PSII). PSII is a light-driven water:plastoquinone oxidoreductase that uses light energy to abstract electrons from H(2)O, generating O(2) and a proton gradient subsequently used for ATP formation. It consists of a core antenna complex that captures photons, and an electron transfer chain that converts photonic excitation into a charge separation. The chain is Photosystem II reaction center protein J from Adiantum capillus-veneris (Maidenhair fern).